We begin with the raw amino-acid sequence, 681 residues long: Envelope glycoprotein (681 aa).

Residues 1–18 (MKTTCFLISLILIQGTKN) form the signal peptide. At 19-648 (LPILEIASNN…GLGGKWWTSD (630 aa)) the chain is on the extracellular side. Intrachain disulfides connect Cys37–Cys610, Cys92–Cys119, Cys211–Cys226, Cys512–Cys557, and Cys602–Cys609. The segment at 38-188 (SGTLQKTEDV…FSRQGQGYRH (151 aa)) is receptor-binding. 8 N-linked (GlcNAc...) asparagine; by host glycosylation sites follow: Asn94, Asn171, Asn190, Asn202, Asn207, Asn219, Asn223, and Asn255. Residues 223 to 427 (NQTCAPSKIP…PPTPSSTAQH (205 aa)) are disordered. Composition is skewed to polar residues over residues 244–259 (LTST…TTDP), 281–290 (TSDAVTKQGL), and 308–318 (GGNNTNHSQDA). The segment at 277 to 455 (EPHTTSDAVT…PFLDGLINAP (179 aa)) is mucin-like region. Asn310, Asn313, Asn325, Asn326, Asn337, Asn344, Asn345, Asn350, Asn360, Asn408, and Asn487 each carry an N-linked (GlcNAc...) asparagine; by host glycan. Low complexity predominate over residues 337–347 (NTTTISTNNTS). The segment covering 348–414 (KHNFSTLSAP…TAPNTTNEHF (67 aa)) has biased composition (polar residues). Positions 529-549 (GLSWIPFFGPGIEGLYTAVLI) are fusion peptide. N-linked (GlcNAc...) asparagine; by host glycosylation occurs at Asn564. N-linked (GlcNAc...) asparagine; by host glycosylation is present at Asn619. The chain crosses the membrane as a helical span at residues 649-669 (WGVLTNLGILLLLSIAVLIAL). Residues 670–681 (SCICRIFTKYIG) lie on the Cytoplasmic side of the membrane. 2 S-palmitoyl cysteine; by host lipidation sites follow: Cys671 and Cys673.

This sequence belongs to the filoviruses glycoprotein family. In terms of assembly, homotrimer; each monomer consists of a GP1 and a GP2 subunit linked by disulfide bonds. The resulting peplomers (GP1,2) protrude from the virus surface as spikes. GP1,2 interacts with human CD209 and CLEC4M (collectively referred to as DC-SIGN(R)). Asialoglycoprotein receptor (ASGP-R) may be a liver-specific receptor for GP1,2. Members of the Tyro3 receptor tyrosine kinase family may be cell entry factors interacting with GP1,2. Post-translationally, N-glycosylated. O-glycosylated in the mucin-like region. In terms of processing, specific enzymatic cleavages in vivo yield mature proteins. The precursor is processed into GP1 and GP2 by host cell furin in the trans Golgi, and maybe by other host proteases, to yield the mature GP1 and GP2 proteins. The cleavage site corresponds to the furin optimal cleavage sequence [KR]-X-[KR]-R. Post-translationally, GP1 is phosphorylated on serine residues between residues 260 and 273.

The protein resides in the virion membrane. It is found in the host cell membrane. GP1 is responsible for binding to the receptor(s) on target cells. Interacts with CD209/DC-SIGN and CLEC4M/DC-SIGNR which act as cofactors for virus entry into the host cell. Binding to CD209 and CLEC4M, which are respectively found on dendritic cells (DCs), and on endothelial cells of liver sinusoids and lymph node sinuses, facilitate infection of macrophages and endothelial cells. These interactions not only facilitate virus cell entry, but also allow capture of viral particles by DCs and subsequent transmission to susceptible cells without DCs infection (trans infection). Its function is as follows. GP2 acts as a class I viral fusion protein. Under the current model, the protein has at least 3 conformational states: pre-fusion native state, pre-hairpin intermediate state, and post-fusion hairpin state. During viral and target cell membrane fusion, the coiled coil regions (heptad repeats) assume a trimer-of-hairpins structure, positioning the fusion peptide in close proximity to the C-terminal region of the ectodomain. The formation of this structure appears to drive apposition and subsequent fusion of viral and target cell membranes. Responsible for penetration of the virus into the cell cytoplasm by mediating the fusion of the membrane of the endocytosed virus particle with the endosomal membrane. Low pH in endosomes induces an irreversible conformational change in GP2, releasing the fusion hydrophobic peptide. This chain is Envelope glycoprotein (GP), found in Lake Victoria marburgvirus (strain Musoke-80) (MARV).